Reading from the N-terminus, the 82-residue chain is Small ribosomal subunit protein bS18 (82 aa).

The tract at residues 1-20 (MSETSSAPVRRPFHRRRKTC) is disordered.

This sequence belongs to the bacterial ribosomal protein bS18 family. In terms of assembly, part of the 30S ribosomal subunit. Forms a tight heterodimer with protein bS6.

In terms of biological role, binds as a heterodimer with protein bS6 to the central domain of the 16S rRNA, where it helps stabilize the platform of the 30S subunit. The polypeptide is Small ribosomal subunit protein bS18 (Rhizobium johnstonii (strain DSM 114642 / LMG 32736 / 3841) (Rhizobium leguminosarum bv. viciae)).